Reading from the N-terminus, the 100-residue chain is Urease subunit gamma (100 aa).

Belongs to the urease gamma subunit family. Heterotrimer of UreA (gamma), UreB (beta) and UreC (alpha) subunits. Three heterotrimers associate to form the active enzyme.

It is found in the cytoplasm. It catalyses the reaction urea + 2 H2O + H(+) = hydrogencarbonate + 2 NH4(+). Its pathway is nitrogen metabolism; urea degradation; CO(2) and NH(3) from urea (urease route): step 1/1. The sequence is that of Urease subunit gamma from Haemophilus influenzae (strain ATCC 51907 / DSM 11121 / KW20 / Rd).